The chain runs to 407 residues: MLVGKISGYEDNTRSLERETSEITSLLSQFPGNTNVLVVDTNFTTLLNMKQIMKQYAYQVSIETDAEKALAFLTSCKHEINIVIWDFHMPGIDGLQALKSITSKLDLPVVIMSDDNQTESVMKATFYGACDYVVKPVKEEVMANIWQHIVRKRLIFKPDVAPPKPRMTWSEVFQPVQSHLVPTDGLDRDHFDSITINGGNGIQNMEKKQGKKPRKPRMTWTEELHQKFLEAIEIIGGIEKANPKVLVECLQEMRIEGITRSNVASHLQKHRINLEENQIPQQTQGNGWATAYGTLAPSLQGSDNVNTTIPSYLMNGPATLNQIQQNQYQNGFLTMNNNQIITNPPPPLPYLDHHHQQQHQSSPQFNYLMNNEELLQASGLSATDLELTYPSLPYDPQEYLINGYNYN.

The 116-residue stretch at 35-150 (NVLVVDTNFT…VMANIWQHIV (116 aa)) folds into the Response regulatory domain. Asp86 bears the 4-aspartylphosphate mark. Residues 214–217 (RKPR) carry the Nuclear localization signal motif. A DNA-binding region (myb-like GARP) is located at residues 217–271 (RMTWTEELHQKFLEAIEIIGGIEKANPKVLVECLQEMRIEGITRSNVASHLQKHR).

It belongs to the ARR family. Type-B subfamily. In terms of assembly, binds the target DNA as a monomer. Post-translationally, two-component system major event consists of a His-to-Asp phosphorelay between a sensor histidine kinase (HK) and a response regulator (RR). In plants, the His-to-Asp phosphorelay involves an additional intermediate named Histidine-containing phosphotransfer protein (HPt). This multistep phosphorelay consists of a His-Asp-His-Asp sequential transfer of a phosphate group between first a His and an Asp of the HK protein, followed by the transfer to a conserved His of the HPt protein and finally the transfer to an Asp in the receiver domain of the RR protein. In terms of tissue distribution, detected in trichomes and siliques.

It is found in the nucleus. In terms of biological role, putative transcriptional activator that binds specifically to the DNA sequence 5'-[AG]GATT-3'. Functions as a response regulator involved in His-to-Asp phosphorelay signal transduction system. Phosphorylation of the Asp residue in the receiver domain activates the ability of the protein to promote the transcription of target genes. Could directly activate some type-A response regulators in response to cytokinins. This Arabidopsis thaliana (Mouse-ear cress) protein is Putative two-component response regulator ARR19 (ARR19).